A 390-amino-acid polypeptide reads, in one-letter code: Elongation factor Tu 2 (390 aa).

Residues lysine 10–glutamate 203 form the tr-type G domain. The segment at glycine 19–threonine 26 is G1. Position 19 to 26 (glycine 19 to threonine 26) interacts with GTP. Threonine 26 contacts Mg(2+). Positions glycine 60–asparagine 64 are G2. The interval aspartate 81–glycine 84 is G3. GTP is bound by residues aspartate 81–histidine 85 and asparagine 136–aspartate 139. Positions asparagine 136–aspartate 139 are G4. The interval serine 173–leucine 175 is G5.

The protein belongs to the TRAFAC class translation factor GTPase superfamily. Classic translation factor GTPase family. EF-Tu/EF-1A subfamily. As to quaternary structure, monomer.

The protein localises to the cytoplasm. The enzyme catalyses GTP + H2O = GDP + phosphate + H(+). GTP hydrolase that promotes the GTP-dependent binding of aminoacyl-tRNA to the A-site of ribosomes during protein biosynthesis. This is Elongation factor Tu 2 from Streptomyces avermitilis (strain ATCC 31267 / DSM 46492 / JCM 5070 / NBRC 14893 / NCIMB 12804 / NRRL 8165 / MA-4680).